The sequence spans 628 residues: E3 SUMO-protein ligase PIAS3 (628 aa).

Residues 1–200 form an interaction with CCAR2 region; sequence MAELGELKHM…QLRFCLCETS (200 aa). The SAP domain maps to 11–45; sequence VMSFRVSELQVLLGFAGRNKSGRKHELLAKALHLL. An LXXLL motif motif is present at residues 19–23; sequence LQVLL. Residues lysine 46 and lysine 56 each participate in a glycyl lysine isopeptide (Lys-Gly) (interchain with G-Cter in SUMO2) cross-link. The disordered stretch occupies residues 72–95; sequence PSDLSLLSLPPGTSPVGSPSPLAS. In terms of domain architecture, PINIT spans 115 to 280; sequence MHPPLPQPVH…SLSVYLVRQL (166 aa). Residues lysine 230 and lysine 307 each participate in a glycyl lysine isopeptide (Lys-Gly) (interchain with G-Cter in SUMO2) cross-link. Residues 312–393 form an SP-RING-type zinc finger; sequence PDSEVATTSL…FMEILNSCSD (82 aa). Residues cysteine 343, histidine 345, cysteine 366, and cysteine 369 each coordinate Zn(2+). Positions 450-460 are SUMO1-binding; that stretch reads LTIESSSDEED. Glycyl lysine isopeptide (Lys-Gly) (interchain with G-Cter in SUMO2) cross-links involve residues lysine 466 and lysine 482. The tract at residues 573–618 is disordered; sequence LAPTLGSSHRSATPAPAPGRVSSIVAPGSSLREGHGGPLPSGPSLT.

This sequence belongs to the PIAS family. In terms of assembly, binds SUMO1 and UBE2I. Interacts with AR, BCL11A, GFI1, HMGA2, IRF1, MITF, NCOA2, as well as with STAT3, after treatment with IL6, CNTF or OSM and with STAT5, after PRL stimulation. Interacts with PLAG1. Interacts with ZFHX3. Interacts with MTA1. Interacts with CCAR2 (via N-terminus). Interacts with TRIM8. Interacts with PRDM1. Sumoylated. Widely expressed, with highest levels in lung, kidney and spleen.

It is found in the cytoplasm. The protein localises to the nucleus. Its subcellular location is the nucleus speckle. It functions in the pathway protein modification; protein sumoylation. In terms of biological role, functions as an E3-type small ubiquitin-like modifier (SUMO) ligase, stabilizing the interaction between UBE2I and the substrate, and as a SUMO-tethering factor. Plays a crucial role as a transcriptional coregulation in various cellular pathways, including the STAT pathway and the steroid hormone signaling pathway. The effects of this transcriptional coregulation, transactivation or silencing, may vary depending upon the biological context. Enhances the sumoylation of MTA1 and may participate in its paralog-selective sumoylation. Sumoylates CCAR2 which promotes its interaction with SIRT1. Diminishes the sumoylation of ZFHX3 by preventing the colocalization of ZFHX3 with SUMO1 in the nucleus. The chain is E3 SUMO-protein ligase PIAS3 (Pias3) from Rattus norvegicus (Rat).